A 680-amino-acid chain; its full sequence is Harmonin-binding protein USHBP1 (680 aa).

A compositionally biased stretch (basic residues) spans 1 to 15 (MSARATRPRSRRGRH). Disordered stretches follow at residues 1 to 101 (MSAR…GPAE), 135 to 162 (PVEAEDRDPGAPGSFGNEEEASGPGQQE), and 217 to 250 (ASPPPSMLRAGRRNSNSSSSGAERRPWAPQDSPM). The segment covering 76 to 86 (PEERREPEVEA) has biased composition (basic and acidic residues). Coiled-coil stretches lie at residues 177 to 219 (LGTR…EASP), 362 to 386 (ATNGDLQAAEKEASRLLVKKEVAMD), and 479 to 506 (LADLVLRLQLAQREKRGLELREAALRAQ). The interval 524-562 (LMGDGSSGGSSEDPSSEEEAGEDRQQHYQGPPALLGGQM) is disordered. A coiled-coil region spans residues 573–661 (QELSASLTRA…QQAEELAVLT (89 aa)).

The protein belongs to the MCC family. As to quaternary structure, interacts via its C-terminus with the first PDZ domain of USH1C.

The polypeptide is Harmonin-binding protein USHBP1 (Rattus norvegicus (Rat)).